The primary structure comprises 362 residues: Spermidine/putrescine import ATP-binding protein PotA (362 aa).

One can recognise an ABC transporter domain in the interval 4-235 (IKLDHITKQY…PVNDFVARFI (232 aa)). Residue 37 to 44 (GPSGSGKT) participates in ATP binding.

It belongs to the ABC transporter superfamily. Spermidine/putrescine importer (TC 3.A.1.11.1) family. In terms of assembly, the complex is composed of two ATP-binding proteins (PotA), two transmembrane proteins (PotB and PotC) and a solute-binding protein (PotD).

Its subcellular location is the cell membrane. The enzyme catalyses ATP + H2O + polyamine-[polyamine-binding protein]Side 1 = ADP + phosphate + polyamineSide 2 + [polyamine-binding protein]Side 1.. Its function is as follows. Part of the ABC transporter complex PotABCD involved in spermidine/putrescine import. Responsible for energy coupling to the transport system. The sequence is that of Spermidine/putrescine import ATP-binding protein PotA from Lactobacillus delbrueckii subsp. bulgaricus (strain ATCC 11842 / DSM 20081 / BCRC 10696 / JCM 1002 / NBRC 13953 / NCIMB 11778 / NCTC 12712 / WDCM 00102 / Lb 14).